We begin with the raw amino-acid sequence, 331 residues long: MVSVGIVGTGSYVPDKVLTNFDLEQMVDTNDQWIVSRTGIKERHIAAPETPVSELCYQAALRALEDAKLAPEELDLVIVATITPDFVFPATACLVAERLGAKKAAGFDLQAACTGFLYGVATAAQFIATGIYKNALVIGGETLSKILNWEDRGTCILFGDGAGAAVLQPVEEGYGFLGYDLGMDGAGGSLLTMPGGGSMHPASAETVAKKMHTIQMAGSEVFKFAVRIMGETALKALDKAGLGIGDVDCLIPHQANTRIVDAAVKRLGIDAGKVVVNLDRYGNMSAASIPVALDEAARSGRLNYGDIMVMVGFGGGLTWGAAVVKWSKRGV.

Active-site residues include C113 and H253. The ACP-binding stretch occupies residues 254-258 (QANTR). N283 is a catalytic residue.

The protein belongs to the thiolase-like superfamily. FabH family. Homodimer.

The protein resides in the cytoplasm. The catalysed reaction is malonyl-[ACP] + acetyl-CoA + H(+) = 3-oxobutanoyl-[ACP] + CO2 + CoA. It participates in lipid metabolism; fatty acid biosynthesis. In terms of biological role, catalyzes the condensation reaction of fatty acid synthesis by the addition to an acyl acceptor of two carbons from malonyl-ACP. Catalyzes the first condensation reaction which initiates fatty acid synthesis and may therefore play a role in governing the total rate of fatty acid production. Possesses both acetoacetyl-ACP synthase and acetyl transacylase activities. Its substrate specificity determines the biosynthesis of branched-chain and/or straight-chain of fatty acids. This Desulfitobacterium hafniense (strain DSM 10664 / DCB-2) protein is Beta-ketoacyl-[acyl-carrier-protein] synthase III.